Here is a 317-residue protein sequence, read N- to C-terminus: Beta-sarcoglycan (317 aa).

A disordered region spans residues 1–31 (MAAAAAATEQQSSNGPVKKSMREKAVERRNV). At 1 to 64 (MAAAAAATEQ…GLRGRKGNLA (64 aa)) the chain is on the cytoplasmic side. Basic and acidic residues predominate over residues 20 to 31 (SMREKAVERRNV). Residues 65–85 (ICVIVLLFILAVINLIITLVI) form a helical; Signal-anchor for type II membrane protein membrane-spanning segment. Residues 86 to 317 (WAVIRIGPNG…TSDNPCGDLY (232 aa)) are Extracellular-facing. N-linked (GlcNAc...) asparagine glycans are attached at residues N157, N210, and N257. 2 disulfides stabilise this stretch: C287/C313 and C289/C306.

It belongs to the sarcoglycan beta/delta/gamma/zeta family. Cross-link to form 2 major subcomplexes: one consisting of SGCB, SGCD and SGCG and the other consisting of SGCB and SGCD. The association between SGCB and SGCG is particularly strong while SGCA is loosely associated with the other sarcoglycans. Post-translationally, disulfide bonds are present.

It localises to the cell membrane. The protein resides in the sarcolemma. Its subcellular location is the cytoplasm. It is found in the cytoskeleton. Component of the sarcoglycan complex, a subcomplex of the dystrophin-glycoprotein complex which forms a link between the F-actin cytoskeleton and the extracellular matrix. In Bos taurus (Bovine), this protein is Beta-sarcoglycan (SGCB).